We begin with the raw amino-acid sequence, 38 residues long: Large ribosomal subunit protein bL36 (38 aa).

It belongs to the bacterial ribosomal protein bL36 family.

The chain is Large ribosomal subunit protein bL36 from Pelodictyon phaeoclathratiforme (strain DSM 5477 / BU-1).